We begin with the raw amino-acid sequence, 292 residues long: 33 kDa chaperonin (292 aa).

2 disulfide bridges follow: C230/C232 and C263/C266.

The protein belongs to the HSP33 family. Post-translationally, under oxidizing conditions two disulfide bonds are formed involving the reactive cysteines. Under reducing conditions zinc is bound to the reactive cysteines and the protein is inactive.

The protein localises to the cytoplasm. Its function is as follows. Redox regulated molecular chaperone. Protects both thermally unfolding and oxidatively damaged proteins from irreversible aggregation. Plays an important role in the bacterial defense system toward oxidative stress. This chain is 33 kDa chaperonin, found in Serratia proteamaculans (strain 568).